Consider the following 218-residue polypeptide: Cytochrome b6 (218 aa).

Residues 35–55 (IFYCLGGITLVCFLIQFATGF) form a helical membrane-spanning segment. Cys-38 serves as a coordination point for heme c. Heme b-binding residues include His-89 and His-103. The next 3 membrane-spanning stretches (helical) occupy residues 93–113 (ASMM…TGGF), 119–139 (LTWV…VTGY), and 189–209 (LHTF…FLMI). His-190 and His-205 together coordinate heme b.

It belongs to the cytochrome b family. PetB subfamily. The 4 large subunits of the cytochrome b6-f complex are cytochrome b6, subunit IV (17 kDa polypeptide, PetD), cytochrome f and the Rieske protein, while the 4 small subunits are PetG, PetL, PetM and PetN. The complex functions as a dimer. It depends on heme b as a cofactor. Heme c is required as a cofactor.

Its subcellular location is the cellular thylakoid membrane. In terms of biological role, component of the cytochrome b6-f complex, which mediates electron transfer between photosystem II (PSII) and photosystem I (PSI), cyclic electron flow around PSI, and state transitions. This is Cytochrome b6 from Parasynechococcus marenigrum (strain WH8102).